The chain runs to 486 residues: H2.0-like homeobox protein (486 aa).

2 disordered regions span residues 83 to 173 (ASFQ…SSKD) and 330 to 486 (KWRH…LGGL). The segment covering 125-135 (QQQQQQQQPQQ) has biased composition (low complexity). Residues 276 to 335 (RSWSRAVFSNLQRKGLEKRFEIQKYVTKPDRKQLAAMLGLTDAQVKVWFQNRRMKWRHSK) constitute a DNA-binding region (homeobox). 2 stretches are compositionally biased toward basic and acidic residues: residues 334–349 (SKEA…EAGE) and 363–372 (EERSPSRSEG). Residues 373 to 383 (EAESESSDPES) show a composition bias toward acidic residues. Positions 390 to 401 (DTERTEGTERSL) are enriched in basic and acidic residues. Positions 409-420 (ASAAGALLAASS) are enriched in low complexity. Residues 421 to 440 (GGSGGSGGGGGGGFNFGGLS) show a composition bias toward gly residues. The segment covering 441–474 (SGSTTSAGSSGSHSSGGASELLPAPQPSLSSAPK) has biased composition (low complexity). A compositionally biased stretch (pro residues) spans 475-486 (SPEPVPAPLGGL).

The protein belongs to the H2.0 homeobox family.

The protein localises to the nucleus. Its function is as follows. Transcription factor required for TBX21/T-bet-dependent maturation of Th1 cells as well as maintenance of Th1-specific gene expression. Involved in embryogenesis and hematopoiesis. In Bos taurus (Bovine), this protein is H2.0-like homeobox protein (HLX).